Reading from the N-terminus, the 226-residue chain is MASEQAAESYTVEELVAVNPYNPDILNDLEGFVNDQVSNQTYNLDANLSLLRLYQFEPERLSVQIVSRILIKALMAMPGPDFSLCLFLIPEHVQMEEQFKTLIVLSHYLETARFRQFWDEASKNRNILDVVPGFEQAIQSYAIHVLSLTYQKVPRPVLAEAINIEGLALDKFLEHHIANSGWVIEKGARSQLIVLPRNEFNHPELKKNTAETVPFEHVTRIFPVLS.

A PCI domain is found at 42-200 (YNLDANLSLL…QLIVLPRNEF (159 aa)).

Belongs to the eIF-3 subunit K family. Component of the eukaryotic translation initiation factor 3 (eIF-3) complex.

It is found in the cytoplasm. Component of the eukaryotic translation initiation factor 3 (eIF-3) complex, which is involved in protein synthesis of a specialized repertoire of mRNAs and, together with other initiation factors, stimulates binding of mRNA and methionyl-tRNAi to the 40S ribosome. The eIF-3 complex specifically targets and initiates translation of a subset of mRNAs involved in cell proliferation. The chain is Eukaryotic translation initiation factor 3 subunit K (TIF3K1) from Oryza sativa subsp. japonica (Rice).